Here is a 379-residue protein sequence, read N- to C-terminus: Probable 3-phenylpropionic acid transporter (379 aa).

Residues 1–4 (MVLQ) lie on the Cytoplasmic side of the membrane. The helical transmembrane segment at 5 to 31 (STRWLALGYFTYFFSYGIFLPFWSVWL) threads the bilayer. The Periplasmic portion of the chain corresponds to 32–37 (KGIGLT). Residues 38–66 (PETIGLLLGAGLVARFLGSLLIAPRVSDP) traverse the membrane as a helical segment. Residues 67–70 (SRLI) are Cytoplasmic-facing. A helical membrane pass occupies residues 71 to 96 (SALRVLALLTLLFAVAFWAGAHVAWL). Over 97-100 (MLVM) the chain is Periplasmic. The chain crosses the membrane as a helical span at residues 101-118 (IGFNLFFSPLVPLTDALA). The Cytoplasmic portion of the chain corresponds to 119 to 129 (NTWQKQFPLDY). A helical transmembrane segment spans residues 130–152 (GKVRLWGSVAFVIGSALTGKLVT). The Periplasmic portion of the chain corresponds to 153–155 (MFD). The chain crosses the membrane as a helical span at residues 156–175 (YRVILALLTLGVASMLLGFL). Over 176–207 (IRPTIQPQGASRQQESTGWSAWLALVRQNWRF) the chain is Cytoplasmic. A helical membrane pass occupies residues 208 to 227 (LACVCLLQGAHAAYYGFSAI). Over 228–231 (YWQA) the chain is Periplasmic. A helical membrane pass occupies residues 232–256 (AGYSASAVGYLWSLGVVAEVIIFAL). The Cytoplasmic segment spans residues 257–266 (SNKLFRRCSA). The chain crosses the membrane as a helical span at residues 267–286 (RDMLLISAICGVVRWGIMGA). The Periplasmic segment spans residues 287 to 289 (TTA). A helical membrane pass occupies residues 290–312 (LPWLIVVQILHCGTFTVCHLAAM). Residues 313-323 (RYIAARQGSEV) are Cytoplasmic-facing. Residues 324 to 351 (IRLQAVYSAVAMGGSIAIMTVFAGFLYQ) traverse the membrane as a helical segment. Topologically, residues 352–354 (YLG) are periplasmic. The helical transmembrane segment at 355–375 (HGVFWVMALVALPAMFLRPKV) threads the bilayer. The Cytoplasmic portion of the chain corresponds to 376 to 379 (VPSC).

The protein belongs to the major facilitator superfamily. Phenyl propionate permease (PPP) (TC 2.A.1.27) family.

The protein resides in the cell inner membrane. Probable permease involved in the uptake of 3-phenylpropionic acid. This Escherichia coli (strain K12) protein is Probable 3-phenylpropionic acid transporter (hcaT).